A 546-amino-acid polypeptide reads, in one-letter code: Probable bifunctional SAT/APS kinase (546 aa).

Residues 1–370 (MEKIKYLKSI…LAETYVPKHK (370 aa)) are sulfate adenylyltransferase. An adenylsulfate kinase region spans residues 371–546 (QGFCVWLTGL…FLKKEGFIKD (176 aa)). ATP is bound at residue 379–386 (GLPCAGKS). Ser-453 serves as the catalytic Phosphoserine intermediate.

The protein in the N-terminal section; belongs to the sulfate adenylyltransferase family. In the C-terminal section; belongs to the APS kinase family.

It carries out the reaction sulfate + ATP + H(+) = adenosine 5'-phosphosulfate + diphosphate. The catalysed reaction is adenosine 5'-phosphosulfate + ATP = 3'-phosphoadenylyl sulfate + ADP + H(+). Its pathway is sulfur metabolism; hydrogen sulfide biosynthesis; sulfite from sulfate: step 1/3. The protein operates within sulfur metabolism; hydrogen sulfide biosynthesis; sulfite from sulfate: step 2/3. The sequence is that of Probable bifunctional SAT/APS kinase (sat/cysC) from Aquifex aeolicus (strain VF5).